Here is an 831-residue protein sequence, read N- to C-terminus: Periplasmic nitrate reductase (831 aa).

The segment at residues 1–35 (MTISDSRRTFLKASAAAATASAAGIPLANGTAAEA) is a signal peptide (tat-type signal). Residues 42-98 (IRWDKAACRFCGTGCSVLVGTKEGRVVATQGDPDAPVNRGLNCIKGYFLSKIMYGED) form the 4Fe-4S Mo/W bis-MGD-type domain. [4Fe-4S] cluster is bound by residues Cys49, Cys52, Cys56, and Cys84. Mo-bis(molybdopterin guanine dinucleotide) contacts are provided by residues Lys86, Gln153, Asn178, Cys182, 215-222 (WGSNMAEM), 246-250 (STYEH), 265-267 (QTD), Met375, Gln379, Asn485, 511-512 (SD), Lys534, Asp561, and 721-730 (TGRVLEHWHS). Trp797 contacts substrate. Positions 805 and 822 each coordinate Mo-bis(molybdopterin guanine dinucleotide).

Belongs to the prokaryotic molybdopterin-containing oxidoreductase family. NasA/NapA/NarB subfamily. In terms of assembly, component of the periplasmic nitrate reductase NapAB complex composed of NapA and NapB. [4Fe-4S] cluster serves as cofactor. The cofactor is Mo-bis(molybdopterin guanine dinucleotide). In terms of processing, predicted to be exported by the Tat system. The position of the signal peptide cleavage has not been experimentally proven.

The protein localises to the periplasm. The enzyme catalyses 2 Fe(II)-[cytochrome] + nitrate + 2 H(+) = 2 Fe(III)-[cytochrome] + nitrite + H2O. In terms of biological role, catalytic subunit of the periplasmic nitrate reductase complex NapAB. Receives electrons from NapB and catalyzes the reduction of nitrate to nitrite. In Dinoroseobacter shibae (strain DSM 16493 / NCIMB 14021 / DFL 12), this protein is Periplasmic nitrate reductase.